The chain runs to 134 residues: Small ribosomal subunit protein uS11 (134 aa).

The protein belongs to the universal ribosomal protein uS11 family. Part of the 30S ribosomal subunit. Interacts with proteins S7 and S18. Binds to IF-3.

Functionally, located on the platform of the 30S subunit, it bridges several disparate RNA helices of the 16S rRNA. Forms part of the Shine-Dalgarno cleft in the 70S ribosome. The protein is Small ribosomal subunit protein uS11 of Albidiferax ferrireducens (strain ATCC BAA-621 / DSM 15236 / T118) (Rhodoferax ferrireducens).